The sequence spans 107 residues: Small ribosomal subunit protein uS10c (107 aa).

This sequence belongs to the universal ribosomal protein uS10 family. As to quaternary structure, part of the 30S ribosomal subunit.

The protein resides in the plastid. It is found in the chloroplast. Its function is as follows. Involved in the binding of tRNA to the ribosomes. The chain is Small ribosomal subunit protein uS10c from Phaeodactylum tricornutum (strain CCAP 1055/1).